The following is a 225-amino-acid chain: Small ribosomal subunit protein eS1 (225 aa).

This sequence belongs to the eukaryotic ribosomal protein eS1 family.

This Methanococcus maripaludis (strain DSM 14266 / JCM 13030 / NBRC 101832 / S2 / LL) protein is Small ribosomal subunit protein eS1.